A 458-amino-acid chain; its full sequence is Adenylosuccinate synthetase (458 aa).

GTP-binding positions include 17–23 (GDEGKGK) and 45–47 (GHT). The Proton acceptor role is filled by Asp18. Residues Asp18 and Gly45 each contribute to the Mg(2+) site. IMP is bound by residues 18-21 (DEGK), 43-46 (NAGH), Thr137, Arg151, Gln247, Thr262, and Arg330. Catalysis depends on His46, which acts as the Proton donor. Residue 326–332 (VTTGRSR) coordinates substrate. GTP contacts are provided by residues Arg332, 358–360 (KLD), and 440–442 (STG).

It belongs to the adenylosuccinate synthetase family. Homodimer. Mg(2+) is required as a cofactor.

Its subcellular location is the cytoplasm. The enzyme catalyses IMP + L-aspartate + GTP = N(6)-(1,2-dicarboxyethyl)-AMP + GDP + phosphate + 2 H(+). Its pathway is purine metabolism; AMP biosynthesis via de novo pathway; AMP from IMP: step 1/2. Functionally, plays an important role in the de novo pathway of purine nucleotide biosynthesis. Catalyzes the first committed step in the biosynthesis of AMP from IMP. This chain is Adenylosuccinate synthetase, found in Albidiferax ferrireducens (strain ATCC BAA-621 / DSM 15236 / T118) (Rhodoferax ferrireducens).